Consider the following 90-residue polypeptide: Small ribosomal subunit protein bS20 (90 aa).

This sequence belongs to the bacterial ribosomal protein bS20 family.

Its function is as follows. Binds directly to 16S ribosomal RNA. The sequence is that of Small ribosomal subunit protein bS20 from Mesomycoplasma hyopneumoniae (strain 232) (Mycoplasma hyopneumoniae).